The following is a 143-amino-acid chain: Large ribosomal subunit protein uL11 (143 aa).

Belongs to the universal ribosomal protein uL11 family. In terms of assembly, part of the ribosomal stalk of the 50S ribosomal subunit. Interacts with L10 and the large rRNA to form the base of the stalk. L10 forms an elongated spine to which L12 dimers bind in a sequential fashion forming a multimeric L10(L12)X complex. Post-translationally, one or more lysine residues are methylated.

In terms of biological role, forms part of the ribosomal stalk which helps the ribosome interact with GTP-bound translation factors. This Marinobacter nauticus (strain ATCC 700491 / DSM 11845 / VT8) (Marinobacter aquaeolei) protein is Large ribosomal subunit protein uL11.